Here is a 103-residue protein sequence, read N- to C-terminus: Carboxysome shell protein CcmK2 (103 aa).

One can recognise a BMC domain in the interval 4–90; sequence AVGMIETRGF…PHENLEYVLP (87 aa).

This sequence belongs to the bacterial microcompartments protein family. CcmK subfamily. Homohexamer, might also make dodecamers. Interacts with full-length CcmM. Forms mixed heterohexamers of all possible stoichiometries with CcmK1, which might form dodecamers. Only very weak interactions with CcmK3 and CcmK4 were seen.

The protein resides in the carboxysome. Its function is as follows. One of the shell proteins of the carboxysome, a polyhedral inclusion where RuBisCO (ribulose bisphosphate carboxylase, rbcL-rbcS) is sequestered. The central pore probably regulates metabolite flux. Hexamers make sheets that form the facets of the polyhedral carboxysome. The polypeptide is Carboxysome shell protein CcmK2 (Synechocystis sp. (strain ATCC 27184 / PCC 6803 / Kazusa)).